A 237-amino-acid polypeptide reads, in one-letter code: Small ribosomal subunit protein uS3 (237 aa).

Residues 39-107 enclose the KH type-2 domain; it reads VRQFLTKELK…PAQINISEVR (69 aa).

It belongs to the universal ribosomal protein uS3 family. In terms of assembly, part of the 30S ribosomal subunit. Forms a tight complex with proteins S10 and S14.

Functionally, binds the lower part of the 30S subunit head. Binds mRNA in the 70S ribosome, positioning it for translation. The chain is Small ribosomal subunit protein uS3 from Aeromonas hydrophila subsp. hydrophila (strain ATCC 7966 / DSM 30187 / BCRC 13018 / CCUG 14551 / JCM 1027 / KCTC 2358 / NCIMB 9240 / NCTC 8049).